We begin with the raw amino-acid sequence, 217 residues long: METARDYAGALIRPLTFMGLQTKKVLLTPLIHPARPFRVSNHDRSSRRGVMASSLQELISKTLDVLVITTGLVTLVLEEDGTVVDTEEFFQTLRDNTHFMILEKGQKWTPGSKYVPVCKQPKKSGIARVTFDLYRLNPKDFLGCLNVKATMYEMYSVSYDIRCTSFKAVLRNLLRFMSYAAQMTGQFLVYAGTYMLRVLGDTEEQPSPKPSTKGWFM.

The CIDE-N domain maps to Pro33–Pro110. The segment at Cys163–Ala180 is amphipathic helix.

This sequence belongs to the CIDE family. Homodimer. Interacts with CIDEC. Directly interacts with CEBPB. Interacts with isoform CLSTN3beta of CLSTN3; inhibiting the lipid transferase activity of CIDEA. Highly expressed in brown adipose tissue and, at lower levels, in white adipose tissue (at protein level). Undetectable in undifferentiated preadipocytes. Expressed in mammary gland during pregnancy and lactation, in epithelial cells, but not in the surrounding adipose tissue. Secreted into milk via milk fat globules.

Its subcellular location is the lipid droplet. It is found in the nucleus. The catalysed reaction is a triacyl-sn-glycerol(in) = a triacyl-sn-glycerol(out). Lipid transferase that promotes unilocular lipid droplet formation by mediating lipid droplet fusion. Lipid droplet fusion promotes their enlargement, restricting lipolysis and favoring lipid storage. Localizes on the lipid droplet surface, at focal contact sites between lipid droplets, and mediates atypical lipid droplet fusion by promoting directional net neutral lipid transfer from the smaller to larger lipid droplets. The transfer direction may be driven by the internal pressure difference between the contacting lipid droplet pair and occurs at a lower rate than that promoted by CIDEC. May also act as a CEBPB coactivator in epithelial cells to control the expression of a subset of CEBPB downstream target genes, including ID2, IGF1, PRLR, SOCS1, SOCS3, XDH, but not casein. By interacting with CEBPB, strengthens the association of CEBPB with the XDH promoter, increases histone acetylation and dissociates HDAC1 from the promoter. When overexpressed, induces apoptosis; the physiological significance of its role in apoptosis is unclear. In Mus musculus (Mouse), this protein is Lipid transferase CIDEA.